Consider the following 354-residue polypeptide: Uroporphyrinogen decarboxylase (354 aa).

Residues 27 to 31 (RQAGR), F46, D77, Y154, T209, and H327 each bind substrate.

The protein belongs to the uroporphyrinogen decarboxylase family. In terms of assembly, homodimer.

It localises to the cytoplasm. It carries out the reaction uroporphyrinogen III + 4 H(+) = coproporphyrinogen III + 4 CO2. Its pathway is porphyrin-containing compound metabolism; protoporphyrin-IX biosynthesis; coproporphyrinogen-III from 5-aminolevulinate: step 4/4. Catalyzes the decarboxylation of four acetate groups of uroporphyrinogen-III to yield coproporphyrinogen-III. The sequence is that of Uroporphyrinogen decarboxylase from Pseudomonas putida (strain ATCC 47054 / DSM 6125 / CFBP 8728 / NCIMB 11950 / KT2440).